Here is a 525-residue protein sequence, read N- to C-terminus: Lysine--tRNA ligase (525 aa).

A 'HIGH' region motif is present at residues 44–52 (PSGLPHIGT). Positions 290 to 294 (KISKS) match the 'KMSKS' region motif. Lys293 serves as a coordination point for ATP.

Belongs to the class-I aminoacyl-tRNA synthetase family.

It is found in the cytoplasm. The catalysed reaction is tRNA(Lys) + L-lysine + ATP = L-lysyl-tRNA(Lys) + AMP + diphosphate. The sequence is that of Lysine--tRNA ligase from Rickettsia felis (strain ATCC VR-1525 / URRWXCal2) (Rickettsia azadi).